The sequence spans 178 residues: Large ribosomal subunit protein bL25 (178 aa).

The protein belongs to the bacterial ribosomal protein bL25 family. CTC subfamily. As to quaternary structure, part of the 50S ribosomal subunit; part of the 5S rRNA/L5/L18/L25 subcomplex. Contacts the 5S rRNA. Binds to the 5S rRNA independently of L5 and L18.

Its function is as follows. This is one of the proteins that binds to the 5S RNA in the ribosome where it forms part of the central protuberance. The chain is Large ribosomal subunit protein bL25 from Campylobacter jejuni subsp. jejuni serotype O:23/36 (strain 81-176).